The following is a 525-amino-acid chain: Glutamate--cysteine ligase (525 aa).

Belongs to the glutamate--cysteine ligase type 1 family. Type 1 subfamily.

It catalyses the reaction L-cysteine + L-glutamate + ATP = gamma-L-glutamyl-L-cysteine + ADP + phosphate + H(+). It participates in sulfur metabolism; glutathione biosynthesis; glutathione from L-cysteine and L-glutamate: step 1/2. This Pseudomonas putida (strain ATCC 47054 / DSM 6125 / CFBP 8728 / NCIMB 11950 / KT2440) protein is Glutamate--cysteine ligase.